A 165-amino-acid chain; its full sequence is HTH-type transcriptional regulator IscR (165 aa).

The HTH rrf2-type domain occupies 2–131 (RLTSKGRYAV…NNITLAELVN (130 aa)). Positions 28–51 (LADISERQGISLSYLEQLFSRLRK) form a DNA-binding region, H-T-H motif. Positions 92, 98, and 104 each coordinate [2Fe-2S] cluster.

The cofactor is [2Fe-2S] cluster.

Regulates the transcription of several operons and genes involved in the biogenesis of Fe-S clusters and Fe-S-containing proteins. This Erwinia tasmaniensis (strain DSM 17950 / CFBP 7177 / CIP 109463 / NCPPB 4357 / Et1/99) protein is HTH-type transcriptional regulator IscR.